A 361-amino-acid chain; its full sequence is DNA replication and repair protein RecF (361 aa).

30 to 37 (GPNGSGKT) is a binding site for ATP.

It belongs to the RecF family.

It localises to the cytoplasm. Functionally, the RecF protein is involved in DNA metabolism; it is required for DNA replication and normal SOS inducibility. RecF binds preferentially to single-stranded, linear DNA. It also seems to bind ATP. This is DNA replication and repair protein RecF from Yersinia pseudotuberculosis serotype IB (strain PB1/+).